Reading from the N-terminus, the 630-residue chain is MSKIHELSPELTNQIAAGEVIERPASVVKELCENSLDAGSKRIRIDFIDAGLKQITVQDNGSGIAKDQIDLAFTRHATSKIATERDLFNISTLGFRGEALASIAAVSHVEVTTSNDNLGGVRAIFSGSEKKLQEDAASPKGTKITVSDLFFNTPARLKYLRSERTEILKIVDIVNRLALGHPDVSFTLTNNGKVLLKTNGRDDLRQDIANIYGRQLAEKMNILKGKSPDFEISGLISDPNTTRSNRNFISLLLNGRYIKNYRLTQAIMAGYGNKLRPRRYPIAVVKIELDPLLVDVNVHPTKQEVRLSKEQELERLLTTSISEALEQNNQIDSGLNNLLAPKKSTNIDQLKFNLNKDVVNTARPVEFTPQVEPDQNAEVHETGANFVSLDQVRNDDKYVITSTWNDNVNQQVQLSPFDEEKDMQGKDDSIISSGDEILANNLPELTYMGQTKSYLIAHHEEDLYLIDQVNAYRRLAYDQILQDLNSENISQQGLLSPLILDFSNVDYLKLKENLENLQEFGLFLEDFGQNSLILRTYPMWLQPDAEKNVRMILDLYLNQTEHDISKLKAQIAGEITMRQSARRRMLNPVEAQELLKELRNSSDPYQDFEGKIIIIQLSENDLNKMFKKDE.

It belongs to the DNA mismatch repair MutL/HexB family.

In terms of biological role, this protein is involved in the repair of mismatches in DNA. It is required for dam-dependent methyl-directed DNA mismatch repair. May act as a 'molecular matchmaker', a protein that promotes the formation of a stable complex between two or more DNA-binding proteins in an ATP-dependent manner without itself being part of a final effector complex. This chain is DNA mismatch repair protein MutL, found in Lactobacillus johnsonii (strain CNCM I-12250 / La1 / NCC 533).